Here is a 506-residue protein sequence, read N- to C-terminus: Aminoaldehyde dehydrogenase 2 (506 aa).

A Na(+)-binding site is contributed by Asp101. Residues 161 to 163 and 187 to 190 each bind NAD(+); these read TPW and KPSE. Leu191 contributes to the Na(+) binding site. Residues 241-244 and Glu262 contribute to the NAD(+) site; that span reads STET. Residue Glu262 is the Proton acceptor of the active site. Cys297 (nucleophile) is an active-site residue. Residues Glu396 and Trp462 each coordinate NAD(+).

The protein belongs to the aldehyde dehydrogenase family.

The enzyme catalyses 4-aminobutanal + NAD(+) + H2O = 4-aminobutanoate + NADH + 2 H(+). It carries out the reaction 3-aminopropanal + NAD(+) + H2O = beta-alanine + NADH + 2 H(+). It catalyses the reaction 4-(trimethylamino)butanal + NAD(+) + H2O = 4-(trimethylamino)butanoate + NADH + 2 H(+). The catalysed reaction is 4-guanidinobutanal + NAD(+) + H2O = 4-guanidinobutanoate + NADH + 2 H(+). The protein operates within amine and polyamine biosynthesis; betaine biosynthesis via choline pathway; betaine from betaine aldehyde: step 1/1. Functionally, dehydrogenase that catalyzes the oxidation of several aminoaldehydes. Metabolizes and detoxifies aldehyde products of polyamine degradation to non-toxic amino acids. Catalyzes the oxidation of 4-aminobutanal and 3-aminopropanal to 4-aminobutanoate and beta-alanine, respectively. Catalyzes the oxidation of 4-(trimethylamino)butanal and 4-guanidinobutanal to 4-trimethylammoniobutanoate and 4-guanidinobutanoate, respectively. The protein is Aminoaldehyde dehydrogenase 2 of Zea mays (Maize).